A 274-amino-acid polypeptide reads, in one-letter code: MLYIVDFDETITTYDTIHLLAEAVNKPEEWSVISDKYWQEYLAWREALPHSTTLTSYLPLLGGSRYLEEASIKRIEKSQYFSGLSEGALDNIVQLITLRAGFVEFINALVPDLRVSKTIFHVLSVNWSARVIEQTLLHHTDLTADLLCVHANDFDFDTSTNTTNGRILARNASSLLMNSTDKVREFRRIVQTDAVSSPLNVVYIGDSPTDFGCLQISPISILMRSNQKYYDILSRFEDVQLVDISEFPVQKAVPGKKIIYTCSDWCAIQKAFLA.

It belongs to the CTO1 family.

It localises to the cytoplasm. The protein localises to the nucleus. In Schizosaccharomyces pombe (strain 972 / ATCC 24843) (Fission yeast), this protein is CTO1 family protein C17G9.12c.